Here is a 139-residue protein sequence, read N- to C-terminus: Large ribosomal subunit protein bL20 (139 aa).

It belongs to the bacterial ribosomal protein bL20 family.

Functionally, binds directly to 23S ribosomal RNA and is necessary for the in vitro assembly process of the 50S ribosomal subunit. It is not involved in the protein synthesizing functions of that subunit. In Leuconostoc citreum (strain KM20), this protein is Large ribosomal subunit protein bL20.